A 283-amino-acid chain; its full sequence is Bis(5'-nucleosyl)-tetraphosphatase, symmetrical (283 aa).

This sequence belongs to the Ap4A hydrolase family.

It carries out the reaction P(1),P(4)-bis(5'-adenosyl) tetraphosphate + H2O = 2 ADP + 2 H(+). Its function is as follows. Hydrolyzes diadenosine 5',5'''-P1,P4-tetraphosphate to yield ADP. The polypeptide is Bis(5'-nucleosyl)-tetraphosphatase, symmetrical (Pseudomonas aeruginosa (strain LESB58)).